A 161-amino-acid polypeptide reads, in one-letter code: Allophycocyanin beta chain (161 aa).

Asn71 carries the post-translational modification N4-methylasparagine. Position 81 (Cys81) interacts with (2R,3E)-phycocyanobilin.

It belongs to the phycobiliprotein family. Heterodimer of an alpha and a beta chain. Post-translationally, contains one covalently linked phycocyanobilin chromophore.

It is found in the cellular thylakoid membrane. Its function is as follows. Light-harvesting photosynthetic bile pigment-protein from the phycobiliprotein complex. Allophycocyanin has a maximum absorption at approximately 650 nanometers. This Arthrospira platensis (Spirulina platensis) protein is Allophycocyanin beta chain (apcB).